A 451-amino-acid polypeptide reads, in one-letter code: 3-phosphoshikimate 1-carboxyvinyltransferase (451 aa).

3-phosphoshikimate contacts are provided by lysine 30, serine 31, and arginine 35. Lysine 30 lines the phosphoenolpyruvate pocket. Phosphoenolpyruvate contacts are provided by glycine 101 and arginine 130. 5 residues coordinate 3-phosphoshikimate: serine 176, serine 177, glutamine 178, aspartate 321, and lysine 348. Glutamine 178 is a phosphoenolpyruvate binding site. Aspartate 321 (proton acceptor) is an active-site residue. Phosphoenolpyruvate is bound by residues arginine 352 and glutamine 422.

This sequence belongs to the EPSP synthase family. As to quaternary structure, monomer.

The protein resides in the cytoplasm. The catalysed reaction is 3-phosphoshikimate + phosphoenolpyruvate = 5-O-(1-carboxyvinyl)-3-phosphoshikimate + phosphate. The protein operates within metabolic intermediate biosynthesis; chorismate biosynthesis; chorismate from D-erythrose 4-phosphate and phosphoenolpyruvate: step 6/7. Catalyzes the transfer of the enolpyruvyl moiety of phosphoenolpyruvate (PEP) to the 5-hydroxyl of shikimate-3-phosphate (S3P) to produce enolpyruvyl shikimate-3-phosphate and inorganic phosphate. This Burkholderia pseudomallei (strain K96243) protein is 3-phosphoshikimate 1-carboxyvinyltransferase.